An 815-amino-acid polypeptide reads, in one-letter code: Ferripyoverdine receptor (815 aa).

The first 43 residues, 1-43 (MPAPHGLSPLSKAFLMRRAFQRRILPHSLAMALSLPLAGYVQA), serve as a signal peptide directing secretion. One can recognise a TBDR plug domain in the interval 161–271 (TPRETPQSIT…LGATINLIRK (111 aa)). The TBDR beta-barrel domain occupies 276–815 (EFKGHVELGA…NLMFSTRWDF (540 aa)). The TonB C-terminal box signature appears at 798–815 (SASYGDPRNLMFSTRWDF).

It belongs to the TonB-dependent receptor family.

It is found in the cell outer membrane. Its function is as follows. Receptor for the siderophore ferripyoverdine. The protein is Ferripyoverdine receptor (fpvA) of Pseudomonas aeruginosa (strain ATCC 15692 / DSM 22644 / CIP 104116 / JCM 14847 / LMG 12228 / 1C / PRS 101 / PAO1).